A 433-amino-acid chain; its full sequence is Isocitrate dehydrogenase [NADP], chloroplastic (433 aa).

Residues 1 to 21 (QFSPNLSFSAFFPIITFTTAT) constitute a chloroplast transit peptide. Residues 98-100 (TIT) and Arg105 contribute to the NADP(+) site. Thr100 contacts substrate. Residues 117 to 123 (SPNGTIR), Arg132, and Arg155 contribute to the substrate site. Asp275 is a binding site for Mn(2+). An NADP(+)-binding site is contributed by Lys283. Position 298 (Asp298) interacts with Mn(2+). NADP(+)-binding positions include 333-338 (GTVTRH) and Asn351.

This sequence belongs to the isocitrate and isopropylmalate dehydrogenases family. Mg(2+) serves as cofactor. Requires Mn(2+) as cofactor. As to expression, detected in all tissues examined.

The protein localises to the plastid. It localises to the chloroplast. The enzyme catalyses D-threo-isocitrate + NADP(+) = 2-oxoglutarate + CO2 + NADPH. This chain is Isocitrate dehydrogenase [NADP], chloroplastic, found in Medicago sativa (Alfalfa).